We begin with the raw amino-acid sequence, 82 residues long: Small ribosomal subunit protein uS17 (82 aa).

This sequence belongs to the universal ribosomal protein uS17 family. Part of the 30S ribosomal subunit.

One of the primary rRNA binding proteins, it binds specifically to the 5'-end of 16S ribosomal RNA. The chain is Small ribosomal subunit protein uS17 from Aeromonas salmonicida (strain A449).